Here is a 196-residue protein sequence, read N- to C-terminus: 3-isopropylmalate dehydratase small subunit (196 aa).

Belongs to the LeuD family. LeuD type 1 subfamily. In terms of assembly, heterodimer of LeuC and LeuD.

The enzyme catalyses (2R,3S)-3-isopropylmalate = (2S)-2-isopropylmalate. It functions in the pathway amino-acid biosynthesis; L-leucine biosynthesis; L-leucine from 3-methyl-2-oxobutanoate: step 2/4. Its function is as follows. Catalyzes the isomerization between 2-isopropylmalate and 3-isopropylmalate, via the formation of 2-isopropylmaleate. The protein is 3-isopropylmalate dehydratase small subunit of Rhodopirellula baltica (strain DSM 10527 / NCIMB 13988 / SH1).